A 434-amino-acid polypeptide reads, in one-letter code: MPIITDVYAREVLDSRGNPTVEVEVLTESGAFGRALVPSGASTGEHEAVELRDGDKSRYLGKGVTKAVENVNEMIAPEIVEGEFSVLDQVSIDKMMIQLDGTHNKGKLGANAILGVSIAVARAAADLLGQPLYKYLGGFNGKQLPVPMMNIVNGGSHSDAPIAFQEFMILPVGAESFKESLRWGAEIFHNLKSILSERGLETAVGDEGGFAPRFEGTEDAVETIIKAIEKAGYKPGEDVFLGFDCASSEFYENGVYDYTKFEGEHGAKRSAAEQVDYLEELIGKYPIITIEDGMDENDWEGWKQLTDRIGDKVQLVGDDLFVTNTEILSKGIEQGIGNSILIKVNQIGTLTETFDAIEMAQKAGYTAVVSHRSGETEDTTIADIAVATNAGQIKTGSLSRTDRIAKYNQLLRIEDELYETAKFEGIKSFYNLDK.

Gln-165 serves as a coordination point for (2R)-2-phosphoglycerate. Residue Glu-207 is the Proton donor of the active site. Residues Asp-244, Glu-291, and Asp-318 each coordinate Mg(2+). The (2R)-2-phosphoglycerate site is built by Lys-343, Arg-372, Ser-373, and Lys-394. Lys-343 (proton acceptor) is an active-site residue.

This sequence belongs to the enolase family. Requires Mg(2+) as cofactor.

The protein localises to the cytoplasm. It localises to the secreted. It is found in the cell surface. It catalyses the reaction (2R)-2-phosphoglycerate = phosphoenolpyruvate + H2O. Its pathway is carbohydrate degradation; glycolysis; pyruvate from D-glyceraldehyde 3-phosphate: step 4/5. In terms of biological role, catalyzes the reversible conversion of 2-phosphoglycerate (2-PG) into phosphoenolpyruvate (PEP). It is essential for the degradation of carbohydrates via glycolysis. The protein is Enolase of Staphylococcus epidermidis (strain ATCC 35984 / DSM 28319 / BCRC 17069 / CCUG 31568 / BM 3577 / RP62A).